We begin with the raw amino-acid sequence, 175 residues long: uncharacterized protein (175 aa).

Over residues 35–56 the composition is skewed to low complexity; that stretch reads LIENSNYDNNNINNNNNNNNTD. The interval 35–70 is disordered; sequence LIENSNYDNNNINNNNNNNNTDNDNDNNNDNEPFYN. 2 helical membrane-spanning segments follow: residues 106-126 and 132-152; these read ILSF…FFNY and YFII…KSIF.

The protein localises to the membrane. This is an uncharacterized protein from Dictyostelium discoideum (Social amoeba).